The primary structure comprises 931 residues: Myocardin-related transcription factor A (931 aa).

The interval 1–256 (MPPLKSPAAF…KQDRGAPPMD (256 aa)) is mediates interaction with SCAI and ACTB. Residue Ser-6 is modified to Phosphoserine. The interval 6 to 23 (SPAAFHEQRRSLERARTE) is intervening spacer sequence 1. Residues 24 to 49 (DYLKRKIRSRPERSELVRMHILEETS) form an RPEL 1 repeat. The short motif at 27–65 (KRKIRSRPERSELVRMHILEETSAEPSLQAKQLKLKRAR) is the Bipartite Nuclear localization signal element. Residues 50-67 (AEPSLQAKQLKLKRARLA) form an intervening spacer sequence 2 region. Residues 68 to 93 (DDLNEKIAQRPGPMELVEKNILPVES) form an RPEL 2 repeat. Disordered regions lie at residues 110–256 (ADSS…PPMD) and 290–344 (PAPP…GALP). A phosphoserine mark is found at Ser-124, Ser-139, and Ser-156. Polar residues predominate over residues 151–162 (SATSASPTQVVS). Residues 180–189 (PPLPPPPLLP) are compositionally biased toward pro residues. Residues 191–215 (SLTNGTTIPTAKSTPTLIKQSQPKS) are compositionally biased toward polar residues. Basic and acidic residues predominate over residues 216-231 (ASEKSQRSKKAKELKP). Thr-305 is modified (phosphothreonine). Ser-310 and Ser-312 each carry phosphoserine. Over residues 310–320 (SLSTTNSSSSS) the composition is skewed to low complexity. Phosphothreonine is present on Thr-313. Phosphoserine occurs at positions 317, 320, and 333. The 35-residue stretch at 347 to 381 (LDDMKVAELKQELKLRSLPVSGTKTELIERLRAYQ) folds into the SAP domain. 2 positions are modified to phosphoserine: Ser-385 and Ser-446. A disordered region spans residues 444-476 (FGSTGSTPPVSPTPSERSLLSTGDENSTPGDTF). Thr-447 is modified (phosphothreonine). At Ser-449 the chain carries Phosphoserine. Thr-450 carries the phosphothreonine modification. Ser-454 is modified (phosphoserine). Thr-456 is modified (phosphothreonine). Phosphoserine is present on Ser-458. The span at 459-473 (ERSLLSTGDENSTPG) shows a compositional bias: polar residues. Ser-482, Ser-492, Ser-507, and Ser-511 each carry phosphoserine. Residues 515 to 563 (RAELEGRDKDQMLQEKDKQIEALTRMLRQKQQLVERLKLQLEQEKRAQQ) are a coiled coil. Disordered stretches follow at residues 558-577 (EKRA…PVKQ), 674-746 (KNAD…SSSQ), and 763-816 (ADFK…RLED). The span at 678–694 (SPGLSSGSPQQPSSQPG) shows a compositional bias: low complexity. A phosphoserine mark is found at Ser-685, Ser-691, and Ser-695. A compositionally biased stretch (polar residues) spans 732–746 (MSQQPKQQENGSSSQ). Positions 763–778 (ADFKEPPSLPGKEKPS) are enriched in basic and acidic residues. The segment covering 784-799 (GSPLAAQPSPSAELPQ) has biased composition (low complexity). A phosphoserine mark is found at Ser-792, Ser-807, and Ser-859.

Interacts with SRF, forming the SRF-MRTFA nuclear complex which binds the 5'-CArG-3' consensus motif (CArG box) on DNA via SRF. Interacts (via RPEL repeats) with globular actin (G-actin), thereby regulating its subcellular location and activity of the complex formed with SRF. Either forms a trivalent (by binding three G-actin monomers) or pentavalent (by binding five G-actin monomers) complex with G-actin. Forms a nuclear ternary complex with SCAI and SRF, leading to suppress MRTFA-induced SRF transcriptional activity. Interacts with beta-actin (ACTB); interaction with ACTB prevents interaction with SCAI. Interacts with MRTFB. Phosphorylation at Ser-6 by Erk inhibits binding of globular actin (G-actin), unmasking the nuclear localization signal (NLS) and promoting nuclear import. As to expression, ubiquitously expressed, has been detected in lung, placenta, small intestine, liver, kidney, spleen, thymus, colon, muscle, heart and brain. Expressed in peripheral blood mononuclear cells (at protein level).

The protein localises to the cytoplasm. The protein resides in the nucleus. Transcription coactivator that associates with the serum response factor (SRF) transcription factor to control expression of genes regulating the cytoskeleton during development, morphogenesis and cell migration. The SRF-MRTFA complex activity responds to Rho GTPase-induced changes in cellular globular actin (G-actin) concentration, thereby coupling cytoskeletal gene expression to cytoskeletal dynamics. MRTFA binds G-actin via its RPEL repeats, regulating activity of the MRTFA-SRF complex. Activity is also regulated by filamentous actin (F-actin) in the nucleus. The chain is Myocardin-related transcription factor A from Homo sapiens (Human).